Reading from the N-terminus, the 132-residue chain is uncharacterized protein (132 aa).

A disordered region spans residues 1-34; sequence MTAGAGGSPPTRRCPATEDRAPATVATPSSADPT.

It to M.tuberculosis Rv2656c.

This is an uncharacterized protein from Mycobacterium tuberculosis (strain CDC 1551 / Oshkosh).